Reading from the N-terminus, the 601-residue chain is MSATDRVNLMCANVLAAVAWPYANGPRHIGHVSGFGVPSDVFARYMRMSGHRVLMVSGSDCHGTAISVKADQEGVTAQECAEKYHRIIAADLQGLGLSYDLYTSTLTDNHAHVTQEIFTRLHENGYVVKRSEMGAFEPSTGRTLPDRYIEGTCPVCGYDDARGDQCDNCGRQLDPADLIGPRSKTTGAAPEFRETEHFFLDLPALAESLASWIDTRTDWRPNVLKFSHNLLEELRPRAITRDLDWGIRVPVEGWQDNPMKSIYVWFDAVIGYLSASIEWARRIGRPDAWREFWNDEDARSYYFMGKDNIVFHSVIWPGILLGTNGRGDKGGEPSEELGTLNLPTEIVSSEFLTMSGSKVSNSRGATIFVGDFLHEFGPDALRYFIAVAGPENQDTDFTWEEFVRRVNFELANEWGNLVNRSISMAFKNCHEIPAAGELTDADRELLDAAAAGFDTVGGLLAHARFKAAITEAMRIVGLANAYISAEEPWKLKDNPERRDTVLHVALQVVSDVNTMMTPFMPHSAQKIYEALGGEGVWAAQPELIETDGAPILMGDYATEQASWGRHEITVGTPLSKPSPIFRKLDAKLAQTGPQWAPVNPQ.

Positions 21 to 31 (PYANGPRHIGH) match the 'HIGH' region motif. Residues cysteine 153, cysteine 156, cysteine 166, and cysteine 169 each contribute to the Zn(2+) site. Asparagine 361 is an ATP binding site.

The protein belongs to the class-I aminoacyl-tRNA synthetase family. MetG type 1 subfamily. Monomer. Zn(2+) is required as a cofactor.

The protein resides in the cytoplasm. The enzyme catalyses tRNA(Met) + L-methionine + ATP = L-methionyl-tRNA(Met) + AMP + diphosphate. Functionally, is required not only for elongation of protein synthesis but also for the initiation of all mRNA translation through initiator tRNA(fMet) aminoacylation. The polypeptide is Methionine--tRNA ligase (Cutibacterium acnes (strain DSM 16379 / KPA171202) (Propionibacterium acnes)).